We begin with the raw amino-acid sequence, 520 residues long: Protein nucleotidyltransferase YdiU (520 aa).

Positions 108, 110, 111, 130, 142, 143, 193, and 200 each coordinate ATP. The Proton acceptor role is filled by aspartate 269. 2 residues coordinate Mg(2+): asparagine 270 and aspartate 279. Residue aspartate 279 participates in ATP binding.

This sequence belongs to the SELO family. It depends on Mg(2+) as a cofactor. Mn(2+) serves as cofactor.

The catalysed reaction is L-seryl-[protein] + ATP = 3-O-(5'-adenylyl)-L-seryl-[protein] + diphosphate. It catalyses the reaction L-threonyl-[protein] + ATP = 3-O-(5'-adenylyl)-L-threonyl-[protein] + diphosphate. It carries out the reaction L-tyrosyl-[protein] + ATP = O-(5'-adenylyl)-L-tyrosyl-[protein] + diphosphate. The enzyme catalyses L-histidyl-[protein] + UTP = N(tele)-(5'-uridylyl)-L-histidyl-[protein] + diphosphate. The catalysed reaction is L-seryl-[protein] + UTP = O-(5'-uridylyl)-L-seryl-[protein] + diphosphate. It catalyses the reaction L-tyrosyl-[protein] + UTP = O-(5'-uridylyl)-L-tyrosyl-[protein] + diphosphate. Nucleotidyltransferase involved in the post-translational modification of proteins. It can catalyze the addition of adenosine monophosphate (AMP) or uridine monophosphate (UMP) to a protein, resulting in modifications known as AMPylation and UMPylation. This chain is Protein nucleotidyltransferase YdiU, found in Cupriavidus pinatubonensis (strain JMP 134 / LMG 1197) (Cupriavidus necator (strain JMP 134)).